A 525-amino-acid chain; its full sequence is FNIP repeat-containing protein DDB_G0274617 (525 aa).

One copy of the FNIP repeat lies at 65–107; the sequence is YQHEIKKEMLPSSIISIIFYNIKNILSSDSIPDTVKFLGFNGY.

The chain is FNIP repeat-containing protein DDB_G0274617 from Dictyostelium discoideum (Social amoeba).